Consider the following 295-residue polypeptide: N-acetylmuramic acid 6-phosphate etherase (295 aa).

An SIS domain is found at 54–217 (VIAAFRRGGR…STASMVGIGK (164 aa)). Glu82 acts as the Proton donor in catalysis. The active site involves Glu113.

Belongs to the GCKR-like family. MurNAc-6-P etherase subfamily. Homodimer.

The catalysed reaction is N-acetyl-D-muramate 6-phosphate + H2O = N-acetyl-D-glucosamine 6-phosphate + (R)-lactate. Its pathway is amino-sugar metabolism; N-acetylmuramate degradation. Functionally, specifically catalyzes the cleavage of the D-lactyl ether substituent of MurNAc 6-phosphate, producing GlcNAc 6-phosphate and D-lactate. The protein is N-acetylmuramic acid 6-phosphate etherase of Geobacillus thermodenitrificans (strain NG80-2).